The chain runs to 564 residues: Beta-catenin-like protein 1 homolog (564 aa).

The interval 1–56 is disordered; the sequence is MDVDSIFKNTEETNKKRNPEEADSLEPASSRRRLAEENSDEENEEFDEEGGRFFGS. Over residues 9–20 the composition is skewed to basic and acidic residues; it reads NTEETNKKRNPE. A compositionally biased stretch (acidic residues) spans 37–48; the sequence is ENSDEENEEFDE. Ser-39 carries the phosphoserine modification. HEAT repeat units follow at residues 83 to 133 and 138 to 177; these read PTEL…VLSE and IPIF…DEDV. ARM repeat units lie at residues 179 to 229, 230 to 276, 277 to 326, 328 to 366, and 367 to 411; these read PDAL…LLSV, DNSI…LANS, KEAK…LVQE, KGKS…LLFG, and PLST…LFRS. Residues 465-528 are a coiled coil; it reads EKSTKWFLQQ…DALKNYHENL (64 aa).

It localises to the nucleus. Probable spliceosomal component involved in the activation of pre-mRNA splicing. The chain is Beta-catenin-like protein 1 homolog (ctnnbl1) from Schizosaccharomyces pombe (strain 972 / ATCC 24843) (Fission yeast).